Reading from the N-terminus, the 384-residue chain is Isoafricanol synthase (384 aa).

Residues D95, N245, S249, and E253 each coordinate Mg(2+).

The protein belongs to the terpene synthase family. Mg(2+) serves as cofactor.

The catalysed reaction is (2E,6E)-farnesyl diphosphate + H2O = (+)-isoafricanol + diphosphate. Catalyzes the cyclization of farnesyl diphosphate (FPP) to isoafricanol. In Streptomyces violaceusniger (strain Tu 4113), this protein is Isoafricanol synthase.